The following is a 224-amino-acid chain: Ribosomal RNA small subunit methyltransferase G (224 aa).

Residues Gly92, Leu97, 143-144, and Arg156 each bind S-adenosyl-L-methionine; that span reads VE.

It belongs to the methyltransferase superfamily. RNA methyltransferase RsmG family.

Its subcellular location is the cytoplasm. The enzyme catalyses guanosine(527) in 16S rRNA + S-adenosyl-L-methionine = N(7)-methylguanosine(527) in 16S rRNA + S-adenosyl-L-homocysteine. Its function is as follows. Specifically methylates the N7 position of guanine in position 527 of 16S rRNA. This Albidiferax ferrireducens (strain ATCC BAA-621 / DSM 15236 / T118) (Rhodoferax ferrireducens) protein is Ribosomal RNA small subunit methyltransferase G.